The following is an 84-amino-acid chain: Small ribosomal subunit protein bS16 (84 aa).

Belongs to the bacterial ribosomal protein bS16 family.

In Thioalkalivibrio sulfidiphilus (strain HL-EbGR7), this protein is Small ribosomal subunit protein bS16.